The primary structure comprises 173 residues: Bursicon (173 aa).

An N-terminal signal peptide occupies residues 1–32; the sequence is MLRHLLRHENNKVFVLILLYCVLVSILKLCTA. Intrachain disulfides connect Cys52–Cys101, Cys66–Cys115, Cys76–Cys136, Cys80–Cys138, and Cys98–Cys141. Positions 52–142 constitute a CTCK domain; that stretch reads CQVTPVIHVL…PLECMCRPCT (91 aa).

In terms of assembly, heterodimer of Burs and Pburs. As to expression, expressed in one to two pairs of neurons in each of the thoracic and abdominal neuromeres of the larval CNS. Coexpressed with CCAP in most CCAP-specific neurons. Coexpressed with Pburs in four bilateral neurons in thoracic and abdominal neuromeres of the ventral nervous system.

It is found in the secreted. Functionally, final heterodimeric neurohormone released at the end of the molting cycle, involved in the sclerotization (tanning) of the insect cuticle, melanization and wing spreading. Heterodimer specifically activates the G protein-coupled receptor rk. The polypeptide is Bursicon (Drosophila melanogaster (Fruit fly)).